The primary structure comprises 266 residues: Phosphate import ATP-binding protein PstB (266 aa).

Positions 15-261 (VQKSVVNKLN…PKNKQTEDYI (247 aa)) constitute an ABC transporter domain. Residue 50 to 57 (GPSGCGKS) participates in ATP binding.

This sequence belongs to the ABC transporter superfamily. Phosphate importer (TC 3.A.1.7) family. As to quaternary structure, the complex is composed of two ATP-binding proteins (PstB), two transmembrane proteins (PstC and PstA) and a solute-binding protein (PstS).

The protein resides in the cell inner membrane. It catalyses the reaction phosphate(out) + ATP + H2O = ADP + 2 phosphate(in) + H(+). Its function is as follows. Part of the ABC transporter complex PstSACB involved in phosphate import. Responsible for energy coupling to the transport system. The protein is Phosphate import ATP-binding protein PstB of Nitrosomonas europaea (strain ATCC 19718 / CIP 103999 / KCTC 2705 / NBRC 14298).